The sequence spans 89 residues: MVNMKSVALIVIVMMAFMMVDPSMGAGECVQGRCPSGMCCSQFGYCGRGPKYCGRASTTVDHQADAAAAAATKTANNPTDAKLAGAGSP.

The N-terminal stretch at 1–25 (MVNMKSVALIVIVMMAFMMVDPSMG) is a signal peptide. One can recognise a Chitin-binding type-1 domain in the interval 26–68 (AGECVQGRCPSGMCCSQFGYCGRGPKYCGRASTTVDHQADAAA). Disulfide bonds link C29–C40, C34–C46, and C39–C53. Positions 56-89 (ASTTVDHQADAAAAAATKTANNPTDAKLAGAGSP) are cleaved as a propeptide — removed in mature form.

Chitin-binding protein that inhibits the growth of the fungal pathogens B.cinerea, F.culmorum, H.sativum and A.consortiale, but not that of R.solani. Induces morphological changes in the fungal pathogens F.culmorum, H.sativum and R.solani, but not in A.consortiale and B.cinerea. Has antibacterial activity against the Gram-positive bacterium B.subtilis, but lacks antibacterial activity against the Gram-negative bacterium E.coli. The protein is Antimicrobial peptide Ar-AMP of Amaranthus retroflexus (Redroot amaranth).